The primary structure comprises 109 residues: Aquaporin-2 (109 aa).

Topologically, residues 1–6 are cytoplasmic; the sequence is SIAFSR. The helical transmembrane segment at 7-27 threads the bilayer; that stretch reads AVFAEFLATLLFVFFGLGSAL. The Extracellular segment spans residues 28–35; the sequence is NWPSALPS. The helical transmembrane segment at 36–54 threads the bilayer; it reads TLQIAMAFGLGIGTLVQAL. Residues 55–59 lie on the Cytoplasmic side of the membrane; it reads GHVSG. Residues 60 to 69 constitute an intramembrane region (discontinuously helical); the sequence is AHINPAVTVA. Positions 63-65 match the NPA 1 motif; the sequence is NPA. Residues 70 to 80 lie on the Cytoplasmic side of the membrane; the sequence is CLVGCHVSFLR. A helical membrane pass occupies residues 81–102; the sequence is AAFYVAAQLLGAVAGAALLHEI. Residues 103–109 are Extracellular-facing; the sequence is TPAEVRG.

This sequence belongs to the MIP/aquaporin (TC 1.A.8) family. In terms of assembly, homotetramer. Post-translationally, serine phosphorylation is necessary and sufficient for expression at the apical membrane. Endocytosis is not phosphorylation-dependent. In terms of processing, N-glycosylated.

Its subcellular location is the apical cell membrane. The protein localises to the basolateral cell membrane. It is found in the cell membrane. The protein resides in the cytoplasmic vesicle membrane. It localises to the golgi apparatus. Its subcellular location is the trans-Golgi network membrane. The catalysed reaction is H2O(in) = H2O(out). It carries out the reaction glycerol(in) = glycerol(out). Forms a water-specific channel that provides the plasma membranes of renal collecting duct with high permeability to water, thereby permitting water to move in the direction of an osmotic gradient. Plays an essential role in renal water homeostasis. Could also be permeable to glycerol. The sequence is that of Aquaporin-2 from Oryctolagus cuniculus (Rabbit).